Consider the following 945-residue polypeptide: Oxysterol-binding protein homolog C23H4.01c (945 aa).

The region spanning 1 to 131 (METVEIRSKS…PKTVTFLLTA (131 aa)) is the GOLD domain. A PH domain is found at 149 to 243 (KQIISGTLLK…WCNALEKAKN (95 aa)). Phosphoserine is present on residues S288, S419, and S421. 2 disordered regions span residues 396–555 (ESGA…LPHS) and 846–894 (LEKD…MEEK). Residues 443–454 (TSSISDTSSNSS) are compositionally biased toward low complexity. Positions 460 to 470 (LNATSLASTVD) are enriched in polar residues. Over residues 482-499 (ESNKENDIKRKQPFHDLM) the composition is skewed to basic and acidic residues. Phosphoserine is present on S503.

This sequence belongs to the OSBP family.

It localises to the cytoplasm. The chain is Oxysterol-binding protein homolog C23H4.01c from Schizosaccharomyces pombe (strain 972 / ATCC 24843) (Fission yeast).